The sequence spans 254 residues: ATP synthase subunit a (254 aa).

A propeptide spans 1–6 (MAFLIH) (removed in mature form). The next 7 helical transmembrane spans lie at 32-52 (LTNLGLYTILTVYLVLALHIM), 83-103 (IGAANEMYLPFIYSLFFFILI), 119-139 (SIMVSIGLSMTIFIGVTILGL), 146-166 (FFSFFVPSGTPLGLVPLLVPI), 182-202 (LFANVTAGHVLMKILAGFLAP), 207-227 (TFIISVLTVLPFIIFTGIIGL), and 228-248 (EIAVSFIQAYVFCVLTCSYLK).

Belongs to the ATPase A chain family. F-type ATPases have 2 components, CF(1) - the catalytic core - and CF(0) - the membrane proton channel. CF(1) has five subunits: alpha(3), beta(3), gamma(1), delta(1), epsilon(1). CF(0) has three main subunits: a, b and c.

Its subcellular location is the mitochondrion inner membrane. Its function is as follows. Mitochondrial membrane ATP synthase (F(1)F(0) ATP synthase or Complex V) produces ATP from ADP in the presence of a proton gradient across the membrane which is generated by electron transport complexes of the respiratory chain. F-type ATPases consist of two structural domains, F(1) - containing the extramembraneous catalytic core and F(0) - containing the membrane proton channel, linked together by a central stalk and a peripheral stalk. During catalysis, ATP synthesis in the catalytic domain of F(1) is coupled via a rotary mechanism of the central stalk subunits to proton translocation. Key component of the proton channel; it may play a direct role in the translocation of protons across the membrane. This is ATP synthase subunit a (ATP6) from Mycosarcoma maydis (Corn smut fungus).